The following is a 180-amino-acid chain: Epididymal-specific lipocalin-6 (180 aa).

The signal sequence occupies residues 1-20 (MGGLLLAALLALVAVPRAQA). Residues Cys81 and Cys174 are joined by a disulfide bond.

This sequence belongs to the calycin superfamily. Lipocalin family.

Its subcellular location is the secreted. Functionally, may play a role in male fertility. The protein is Epididymal-specific lipocalin-6 (LCN6) of Macaca mulatta (Rhesus macaque).